The chain runs to 401 residues: NADH-ubiquinone oxidoreductase 49 kDa subunit (401 aa).

The protein belongs to the complex I 49 kDa subunit family.

It localises to the mitochondrion. It catalyses the reaction a ubiquinone + NADH + 5 H(+)(in) = a ubiquinol + NAD(+) + 4 H(+)(out). Functionally, core subunit of the mitochondrial membrane respiratory chain NADH dehydrogenase (Complex I) that is believed to belong to the minimal assembly required for catalysis. Complex I functions in the transfer of electrons from NADH to the respiratory chain. The immediate electron acceptor for the enzyme is believed to be ubiquinone. Component of the iron-sulfur (IP) fragment of the enzyme. This chain is NADH-ubiquinone oxidoreductase 49 kDa subunit (NAD7), found in Acanthamoeba castellanii (Amoeba).